The following is a 180-amino-acid chain: Isopentenyl-diphosphate Delta-isomerase (180 aa).

Residues H22 and H28 each contribute to the Mn(2+) site. Positions L26–I160 constitute a Nudix hydrolase domain. C62 is a catalytic residue. C62 contacts Mg(2+). Mn(2+) is bound at residue H64. E82 is a binding site for Mg(2+). Positions 108 and 110 each coordinate Mn(2+). The active site involves E110.

The protein belongs to the IPP isomerase type 1 family. Mg(2+) serves as cofactor. Requires Mn(2+) as cofactor.

The protein localises to the cytoplasm. It catalyses the reaction isopentenyl diphosphate = dimethylallyl diphosphate. It functions in the pathway isoprenoid biosynthesis; dimethylallyl diphosphate biosynthesis; dimethylallyl diphosphate from isopentenyl diphosphate: step 1/1. Catalyzes the 1,3-allylic rearrangement of the homoallylic substrate isopentenyl (IPP) to its highly electrophilic allylic isomer, dimethylallyl diphosphate (DMAPP). This Ruegeria pomeroyi (strain ATCC 700808 / DSM 15171 / DSS-3) (Silicibacter pomeroyi) protein is Isopentenyl-diphosphate Delta-isomerase.